Consider the following 539-residue polypeptide: Membrane protein insertase YidC (539 aa).

Residues Val-6–Pro-26 form a helical membrane-spanning segment. Residues Pro-28–Ser-63 form a disordered region. Positions Ala-32–Ala-45 are enriched in low complexity. The segment covering Val-54–Ser-63 has biased composition (polar residues). A run of 3 helical transmembrane segments spans residues Tyr-349–His-369, Met-421–Leu-441, and Ile-496–Val-516.

Belongs to the OXA1/ALB3/YidC family. Type 1 subfamily. Interacts with the Sec translocase complex via SecD. Specifically interacts with transmembrane segments of nascent integral membrane proteins during membrane integration.

The protein resides in the cell inner membrane. Required for the insertion and/or proper folding and/or complex formation of integral membrane proteins into the membrane. Involved in integration of membrane proteins that insert both dependently and independently of the Sec translocase complex, as well as at least some lipoproteins. Aids folding of multispanning membrane proteins. The protein is Membrane protein insertase YidC of Maridesulfovibrio salexigens (strain ATCC 14822 / DSM 2638 / NCIMB 8403 / VKM B-1763) (Desulfovibrio salexigens).